Reading from the N-terminus, the 368-residue chain is Saccharopine dehydrogenase [NAD(+), L-lysine-forming] (368 aa).

L-saccharopine contacts are provided by Arg-18 and Lys-77. Lys-77 serves as the catalytic Proton acceptor. Position 85 is a phosphoserine (Ser-85). Catalysis depends on His-96, which acts as the Proton donor. Gln-101 serves as a coordination point for L-saccharopine. Residue Arg-130 coordinates NAD(+). Arg-131 and Phe-135 together coordinate L-saccharopine. NAD(+)-binding positions include 203 to 204, Asp-227, Thr-231, Tyr-251, and Val-278; that span reads GR. Residues Cys-205 and Cys-249 are joined by a disulfide bond. 279–281 provides a ligand contact to L-saccharopine; it reads SCD. Position 319-322 (319-322) interacts with NAD(+); the sequence is IDHL.

Belongs to the AlaDH/PNT family. Monomer.

The catalysed reaction is L-saccharopine + NAD(+) + H2O = L-lysine + 2-oxoglutarate + NADH + H(+). It functions in the pathway amino-acid biosynthesis; L-lysine biosynthesis via AAA pathway; L-lysine from L-alpha-aminoadipate (fungal route): step 3/3. Catalyzes the NAD(+)-dependent cleavage of saccharopine to L-lysine and 2-oxoglutarate, the final step in the alpha-aminoadipate (AAA) pathway for lysin biosynthesis. The chain is Saccharopine dehydrogenase [NAD(+), L-lysine-forming] from Schizosaccharomyces pombe (strain 972 / ATCC 24843) (Fission yeast).